Here is a 92-residue protein sequence, read N- to C-terminus: Acylphosphatase (92 aa).

Cysteine 5 and cysteine 49 are joined by a disulfide. An Acylphosphatase-like domain is found at 5–92; the sequence is CIIAWIYGRV…SGELTDFRIR (88 aa). Residues arginine 20 and asparagine 38 contribute to the active site.

This sequence belongs to the acylphosphatase family.

The catalysed reaction is an acyl phosphate + H2O = a carboxylate + phosphate + H(+). The protein is Acylphosphatase of Escherichia coli O1:K1 / APEC.